We begin with the raw amino-acid sequence, 215 residues long: MKLFGKPKPKQDTQETIGKLRLTLDMLEKRQTFLQDKLEKEQEKAKVLVSQKRKREALLCLKKRNNFQNEVTKLQGSYDTLNQQIFALENAKMNMEIMNSMRDGARSLRELHGHLTIDKVDDVIEEIQEQMEIHEEISNAISQPLGNQVEDEEELLRELAEYEQEELDAQLLNIKAPSRELPQEIQVNFPTISKTVPKLSKEEEEIRALEESLAM.

Residues 10–173 (KQDTQETIGK…QEELDAQLLN (164 aa)) are a coiled coil.

This sequence belongs to the SNF7 family. Probable core component of the endosomal sorting required for transport complex III (ESCRT-III). ESCRT-III components are thought to multimerize to form a flat lattice on the perimeter membrane of the endosome.

It localises to the cytoplasmic vesicle membrane. The protein resides in the late endosome membrane. Its function is as follows. Probable core component of the endosomal sorting required for transport complex III (ESCRT-III) which is involved in multivesicular bodies (MVBs) formation and sorting of endosomal cargo proteins into MVBs. MVBs contain intraluminal vesicles (ILVs) that are generated by invagination and scission from the limiting membrane of the endosome and mostly are delivered to lysosomes enabling degradation of membrane proteins. The polypeptide is Charged multivesicular body protein 4 (chmp4) (Dictyostelium discoideum (Social amoeba)).